The chain runs to 363 residues: Ribosomal RNA large subunit methyltransferase M (363 aa).

Residues serine 190, 223–226 (CPGG), aspartate 242, aspartate 262, and aspartate 279 contribute to the S-adenosyl-L-methionine site. The active-site Proton acceptor is the lysine 308.

The protein belongs to the class I-like SAM-binding methyltransferase superfamily. RNA methyltransferase RlmE family. RlmM subfamily. Monomer.

The protein localises to the cytoplasm. It catalyses the reaction cytidine(2498) in 23S rRNA + S-adenosyl-L-methionine = 2'-O-methylcytidine(2498) in 23S rRNA + S-adenosyl-L-homocysteine + H(+). Functionally, catalyzes the 2'-O-methylation at nucleotide C2498 in 23S rRNA. In Vibrio atlanticus (strain LGP32) (Vibrio splendidus (strain Mel32)), this protein is Ribosomal RNA large subunit methyltransferase M.